Consider the following 201-residue polypeptide: Peptide deformylase (201 aa).

2 residues coordinate Fe cation: Cys92 and His134. The active site involves Glu135. His138 contributes to the Fe cation binding site.

The protein belongs to the polypeptide deformylase family. Fe(2+) serves as cofactor.

It catalyses the reaction N-terminal N-formyl-L-methionyl-[peptide] + H2O = N-terminal L-methionyl-[peptide] + formate. Removes the formyl group from the N-terminal Met of newly synthesized proteins. Requires at least a dipeptide for an efficient rate of reaction. N-terminal L-methionine is a prerequisite for activity but the enzyme has broad specificity at other positions. In Rhodopirellula baltica (strain DSM 10527 / NCIMB 13988 / SH1), this protein is Peptide deformylase.